A 106-amino-acid chain; its full sequence is ATP-dependent Clp protease adapter protein ClpS (106 aa).

The protein belongs to the ClpS family. Binds to the N-terminal domain of the chaperone ClpA.

In terms of biological role, involved in the modulation of the specificity of the ClpAP-mediated ATP-dependent protein degradation. In Vibrio cholerae serotype O1 (strain ATCC 39541 / Classical Ogawa 395 / O395), this protein is ATP-dependent Clp protease adapter protein ClpS.